The chain runs to 492 residues: PHO85 cyclin-8 (492 aa).

Disordered regions lie at residues 1-32, 143-163, and 223-252; these read MANDQDPNKSLINDALTRSMSEFYDDDDDNDS, SGSGKLPGRVKSDTATQGTGR, and KVNSNSQIDTDNHSHESGNTTNNETDENES. Over residues 8–20 the composition is skewed to polar residues; it reads NKSLINDALTRSM. The segment covering 23-32 has biased composition (acidic residues); it reads FYDDDDDNDS. Residue Ser-32 is modified to Phosphoserine.

The protein belongs to the cyclin family. PHO80 subfamily. Forms a cyclin-CDK complex with PHO85.

It localises to the cytoplasm. It is found in the nucleus. Functionally, cyclin partner of the cyclin-dependent kinase (CDK) PHO85. Together with cyclin PCL10, negatively controls glycogen accumulation under favorable growth conditions. Involved in phosphorylation and negative regulation of glycogen synthase GSY2. Also has minor GLC8 kinase activity. The chain is PHO85 cyclin-8 (PCL8) from Saccharomyces cerevisiae (strain ATCC 204508 / S288c) (Baker's yeast).